The following is a 459-amino-acid chain: Tryptophan synthase beta chain (459 aa).

Lysine 121 is subject to N6-(pyridoxal phosphate)lysine.

Belongs to the TrpB family. Tetramer of two alpha and two beta chains. Pyridoxal 5'-phosphate is required as a cofactor.

It catalyses the reaction (1S,2R)-1-C-(indol-3-yl)glycerol 3-phosphate + L-serine = D-glyceraldehyde 3-phosphate + L-tryptophan + H2O. The protein operates within amino-acid biosynthesis; L-tryptophan biosynthesis; L-tryptophan from chorismate: step 5/5. In terms of biological role, the beta subunit is responsible for the synthesis of L-tryptophan from indole and L-serine. The sequence is that of Tryptophan synthase beta chain (trpB) from Pyrococcus horikoshii (strain ATCC 700860 / DSM 12428 / JCM 9974 / NBRC 100139 / OT-3).